The chain runs to 305 residues: Probable 5-dehydro-4-deoxyglucarate dehydratase (305 aa).

The protein belongs to the DapA family.

It carries out the reaction 5-dehydro-4-deoxy-D-glucarate + H(+) = 2,5-dioxopentanoate + CO2 + H2O. It participates in carbohydrate acid metabolism; D-glucarate degradation; 2,5-dioxopentanoate from D-glucarate: step 2/2. The polypeptide is Probable 5-dehydro-4-deoxyglucarate dehydratase (Xanthomonas campestris pv. campestris (strain 8004)).